Consider the following 243-residue polypeptide: 4-phosphopantoate--beta-alanine ligase (243 aa).

ATP-binding positions include Arg-15, Arg-37, 176–178 (DLN), and 182–183 (RT).

It belongs to the archaeal phosphopantothenate synthetase family. Homodimer.

The enzyme catalyses (R)-4-phosphopantoate + beta-alanine + ATP = (R)-4'-phosphopantothenate + AMP + diphosphate + H(+). It functions in the pathway cofactor biosynthesis; coenzyme A biosynthesis. Its function is as follows. Catalyzes the condensation of (R)-4-phosphopantoate and beta-alanine to 4'-phosphopantothenate in the CoA biosynthesis pathway. The sequence is that of 4-phosphopantoate--beta-alanine ligase from Methanospirillum hungatei JF-1 (strain ATCC 27890 / DSM 864 / NBRC 100397 / JF-1).